The sequence spans 766 residues: Phosphoribosylformylglycinamidine synthase subunit PurL (766 aa).

His66 is a catalytic residue. The ATP site is built by Tyr69 and Lys113. Glu115 contributes to the Mg(2+) binding site. Substrate is bound by residues Ser116–His119 and Arg138. The Proton acceptor role is filled by His117. Residue Asp139 participates in Mg(2+) binding. A substrate-binding site is contributed by Gln264. Residue Asp292 coordinates Mg(2+). A substrate-binding site is contributed by Glu336–Gln338. The ATP site is built by Asn524 and Gly561. Position 562 (Asn562) interacts with Mg(2+). Ser564 is a binding site for substrate.

Belongs to the FGAMS family. In terms of assembly, monomer. Part of the FGAM synthase complex composed of 1 PurL, 1 PurQ and 2 PurS subunits.

It localises to the cytoplasm. It catalyses the reaction N(2)-formyl-N(1)-(5-phospho-beta-D-ribosyl)glycinamide + L-glutamine + ATP + H2O = 2-formamido-N(1)-(5-O-phospho-beta-D-ribosyl)acetamidine + L-glutamate + ADP + phosphate + H(+). The protein operates within purine metabolism; IMP biosynthesis via de novo pathway; 5-amino-1-(5-phospho-D-ribosyl)imidazole from N(2)-formyl-N(1)-(5-phospho-D-ribosyl)glycinamide: step 1/2. Functionally, part of the phosphoribosylformylglycinamidine synthase complex involved in the purines biosynthetic pathway. Catalyzes the ATP-dependent conversion of formylglycinamide ribonucleotide (FGAR) and glutamine to yield formylglycinamidine ribonucleotide (FGAM) and glutamate. The FGAM synthase complex is composed of three subunits. PurQ produces an ammonia molecule by converting glutamine to glutamate. PurL transfers the ammonia molecule to FGAR to form FGAM in an ATP-dependent manner. PurS interacts with PurQ and PurL and is thought to assist in the transfer of the ammonia molecule from PurQ to PurL. The protein is Phosphoribosylformylglycinamidine synthase subunit PurL of Mycobacterium bovis (strain BCG / Pasteur 1173P2).